The chain runs to 2602 residues: Filamin-B (2602 aa).

The actin-binding stretch occupies residues 1–239 (MPVTEKDLAE…VMTYLSQFPK (239 aa)). Calponin-homology (CH) domains follow at residues 16 to 122 (KIQQ…LHYS) and 139 to 242 (QTPK…KAKL). The residue at position 216 (threonine 216) is a Phosphothreonine. A disordered region spans residues 244 to 267 (PGAPLKPKLNPKKARAYGRGIEPT). 15 Filamin repeats span residues 249-347 (KPKL…EVNV), 349-446 (KAQG…GVQI), 447-543 (GEAC…EVQV), 544-636 (GPEA…MAFI), 640-736 (TGDY…RVNI), 737-839 (GQGS…RVKV), 840-938 (DPSH…TVGV), 939-1034 (AAPL…TVEA), 1035-1127 (SLPP…KADI), 1128-1222 (EMPF…WVKV), 1223-1322 (EPAI…KVAV), 1323-1415 (TEGC…RVPS), 1416-1511 (KDVV…KVKV), 1512-1608 (LPTY…RIRA), and 1609-1704 (TQTG…TVMA). Phosphothreonine is present on threonine 519. N6-acetyllysine is present on lysine 681. Serine 730 carries the post-translational modification Phosphoserine. Residues 837–850 (VKVDPSHDASKVKA) are compositionally biased toward basic and acidic residues. Residues 837 to 862 (VKVDPSHDASKVKAEGPGLSKAGVEN) are disordered. Residues serine 886, serine 932, serine 983, and serine 1028 each carry the phosphoserine modification. Threonine 1307 is subject to Phosphothreonine. Serine 1316 carries the phosphoserine modification. Residues serine 1433, serine 1505, and serine 1602 each carry the phosphoserine modification. Residues 1705 to 1728 (TDGEVTAMEEAPVNACPPGFRPWV) are hinge 1. 8 Filamin repeats span residues 1729–1813 (TEEA…SPLQ), 1816–1908 (VNYP…TAKI), 1919–1994 (KLGS…SIMV), 1997–2089 (SEIG…TVKI), 2091–2185 (GEGR…QFTV), 2188–2280 (LGEG…LVPV), 2282–2375 (APSD…KVRV), and 2379–2471 (GQAG…KAKV). Lysine 1780 bears the N6-acetyllysine mark. Serine 2083 and serine 2113 each carry phosphoserine. A phosphoserine mark is found at serine 2369 and serine 2465. Lysine 2468 participates in a covalent cross-link: Glycyl lysine isopeptide (Lys-Gly) (interchain with G-Cter in ISG15). Residues 2472-2506 (TGQRLVSPGSANETSSILVESVTRSSTETCYSAIP) are hinge 2. The segment at 2472–2602 (TGQRLVSPGS…PGSPFHVTVP (131 aa)) is self-association site, tail. Phosphoserine occurs at positions 2478, 2481, and 2492. Residues 2507–2601 (KSSSDASKVT…IPGSPFHVTV (95 aa)) form a Filamin 24 repeat. N6-succinyllysine occurs at positions 2518 and 2524. Position 2576 is an N6-acetyllysine (lysine 2576).

This sequence belongs to the filamin family. Homodimer. Interacts with FLNA, FLNC, INPPL1, ITGB1A, ITGB1D, ITGB3, ITGB6, MYOT, MYOZ1, PSEN1 and PSEN2. Interacts with MICALL2. Interacts with RFLNA and RFLNB. Interacts with ASB2 isoform 1; the interaction targets FLNB for proteasomal degradation. ISGylation prevents ability to interact with the upstream activators of the JNK cascade and inhibits IFNA-induced JNK signaling. Post-translationally, ubiquitination by a SCF-like complex containing ASB2 isoform 1 leads to proteasomal degradation which promotes muscle differentiation. Expressed in hippocampus, cortex, cerebellar Purkinje cells and granule cell layers.

The protein localises to the cytoplasm. The protein resides in the cell cortex. It localises to the cytoskeleton. It is found in the stress fiber. Its subcellular location is the myofibril. The protein localises to the sarcomere. The protein resides in the z line. Connects cell membrane constituents to the actin cytoskeleton. May promote orthogonal branching of actin filaments and links actin filaments to membrane glycoproteins. Anchors various transmembrane proteins to the actin cytoskeleton. The sequence is that of Filamin-B (Flnb) from Mus musculus (Mouse).